A 246-amino-acid polypeptide reads, in one-letter code: YjeF N-terminal domain-containing 3 (246 aa).

The region spanning 24–234 is the YjeF N-terminal domain; the sequence is VATVETELLR…DIQKKYELNL (211 aa).

In terms of assembly, interacts with apoa1a. Binds to high-density lipoprotein.

In terms of biological role, accelerates cholesterol efflux from endothelial cells to high-density lipoprotein (HDL) and thereby regulates angiogenesis. Orchestrates hematopoietic stem and progenitor cell emergence from the hemogenic endothelium, a type of specialized endothelium manifesting hematopoietic potential. YJEFN3-mediated cholesterol efflux activates endothelial SREBF2, the master transcription factor for cholesterol biosynthesis, which in turn transactivates NOTCH and promotes hematopoietic stem and progenitor cell emergence. This Danio rerio (Zebrafish) protein is YjeF N-terminal domain-containing 3.